We begin with the raw amino-acid sequence, 383 residues long: Izumo sperm-egg fusion protein 1 (383 aa).

Residues 1–21 (MGLHFTLLLAALANCLCPARL) form the signal peptide. 5 disulfides stabilise this stretch: Cys-22-Cys-149, Cys-25-Cys-152, Cys-135-Cys-159, Cys-139-Cys-165, and Cys-182-Cys-233. Residues 22–306 (CIICDPFVVA…HRPEKKLKSR (285 aa)) lie on the Extracellular side of the membrane. The interval 148–160 (WCNKCEKQMHFCR) is important for interaction with IZUMO1R. In terms of domain architecture, Ig-like C2-type spans 167 to 251 (ERQIEVHRLE…PATIIYYHVT (85 aa)). Asn-204 carries N-linked (GlcNAc...) asparagine glycosylation. Residues 307–327 (LLILLILGFVVLVASVIASVL) traverse the membrane as a helical segment. The Cytoplasmic portion of the chain corresponds to 328 to 383 (HFRKTRVKSKNSNVENKTSAAEFKSEAESPQKMGSRKLSQAEFHTDSSDKVEEADN). Residues 335–383 (KSKNSNVENKTSAAEFKSEAESPQKMGSRKLSQAEFHTDSSDKVEEADN) are disordered. Polar residues predominate over residues 337-346 (KNSNVENKTS). Ser-339, Ser-346, and Ser-366 each carry phosphoserine. The segment covering 370 to 383 (FHTDSSDKVEEADN) has biased composition (basic and acidic residues). Phosphothreonine is present on Thr-372.

The protein belongs to the Izumo family. In terms of assembly, monomer, homodimer; disulfide-linked and homooligomer; depending on the context. Interacts with IZUMO1R/JUNO. IZUMO1 and IZUMO1R/JUNO form a complex with 1:1 stoichiometry. In gamete recognition, IZUMO1R/JUNO first binds to monomeric IZUMO1. The weak, but specific interaction with IZUMO1R/JUNO induces IZUMO1 homodimerization. The process follows a tight binding phase where IZUMO1 bends the entire structure towards the sperm membrane side through a thiol-disulfide exchange reaction. The molecule no longer binds to IZUMO1R/JUNO and instead binds to a putative second oocyte receptor. Interacts with ACE3. Part of a oolemmal binding multimeric complex (IZUMO1 complex) composed at least of IZUMO1 and GLIPR1L1; the complex assemblage is influenced by the maturation status of the male germ cell. Interacts with GLIPR1L1. Interacts with FREY; the interaction retains IZUMO1 at the endoplasmic reticulum membrane and coordinates IZUMO1 complex assembly. Interacts with WDR54. Forms a complex with SPACA6 and TMEM81 on spermatocyte cell membrane. N-glycosylated. Glycosylation is not essential for fusion and for proper protein trafficking in sperm. Post-translationally, phosphorylated. The cytoplasmic C-terminus is phosphorylated and undergoes phosphorylation changes during epididymal transit. Expressed in sperm (at protein level).

It localises to the cell membrane. It is found in the cytoplasmic vesicle. The protein resides in the secretory vesicle. Its subcellular location is the acrosome membrane. Its function is as follows. Essential sperm cell-surface protein required for fertilization by acting as a ligand for IZUMO1R/JUNO receptor on egg. The IZUMO1:IZUMO1R/JUNO interaction is a necessary adhesion event between sperm and egg that is required for fertilization but is not sufficient for cell fusion. The ligand-receptor interaction probably does not act as a membrane 'fusogen'. Plays a critical role in sperm-oolemma binding prior to plasma membrane fusion. Can mediate cell-cell fusion in cultured mammalian cells independently of its binding to IZUMO1R/JUNO. The protein is Izumo sperm-egg fusion protein 1 of Rattus norvegicus (Rat).